A 727-amino-acid polypeptide reads, in one-letter code: LIM domain-binding protein 3 (727 aa).

The PDZ domain occupies 1–84; that stretch reads MSYSVTLTGP…NLSLTLQKSK (84 aa). A phosphoserine mark is found at serine 44, serine 121, and serine 123. The interval 86-197 is disordered; it reads PIPISTTAPP…GSSQPRQYNN (112 aa). Positions 140 to 156 are enriched in low complexity; it reads PTFSPAFSRPSAFSSLA. Residues 188–197 show a composition bias toward polar residues; that stretch reads GSSQPRQYNN. Residue serine 217 is modified to Phosphoserine. At arginine 219 the chain carries Omega-N-methylarginine. Serine 223 bears the Phosphoserine mark. Disordered regions lie at residues 284–440 and 472–529; these read TEFM…YTPS and APSV…PQVP. Low complexity predominate over residues 312-385; it reads ATTPLLPASA…SAPATHTSYS (74 aa). A compositionally biased stretch (pro residues) spans 428 to 440; sequence PYTPSPAPAYTPS. The segment covering 494–513 has biased composition (polar residues); sequence DSFSQKFAPGKSTTSISKQT. Omega-N-methylarginine is present on residues arginine 516 and arginine 533. 3 consecutive LIM zinc-binding domains span residues 549-607, 608-667, and 668-727; these read PLCG…QFFA, PLCA…LFST, and KCHG…TINL.

As to quaternary structure, interacts via its LIM domains with various PKC isoforms. Interacts via its PDZ domain with the ACTN2 C-terminal region. Interacts with MYOZ1, MYOZ2 and MYOZ3. Expressed primarily in skeletal muscle and to a lesser extent in heart. Also detected in brain and placenta.

Its subcellular location is the cytoplasm. It is found in the perinuclear region. The protein resides in the cell projection. It localises to the pseudopodium. The protein localises to the cytoskeleton. Its subcellular location is the myofibril. It is found in the sarcomere. The protein resides in the z line. May function as an adapter in striated muscle to couple protein kinase C-mediated signaling via its LIM domains to the cytoskeleton. In Homo sapiens (Human), this protein is LIM domain-binding protein 3.